We begin with the raw amino-acid sequence, 123 residues long: Small ribosomal subunit protein uS12 (123 aa).

Positions 1 to 23 (MPTISQLVKKGREKVEKKTKSPA) are disordered. Asp-89 is subject to 3-methylthioaspartic acid.

Belongs to the universal ribosomal protein uS12 family. In terms of assembly, part of the 30S ribosomal subunit. Contacts proteins S8 and S17. May interact with IF1 in the 30S initiation complex.

Its function is as follows. With S4 and S5 plays an important role in translational accuracy. In terms of biological role, interacts with and stabilizes bases of the 16S rRNA that are involved in tRNA selection in the A site and with the mRNA backbone. Located at the interface of the 30S and 50S subunits, it traverses the body of the 30S subunit contacting proteins on the other side and probably holding the rRNA structure together. The combined cluster of proteins S8, S12 and S17 appears to hold together the shoulder and platform of the 30S subunit. This is Small ribosomal subunit protein uS12 from Thermodesulfovibrio yellowstonii (strain ATCC 51303 / DSM 11347 / YP87).